Here is a 285-residue protein sequence, read N- to C-terminus: Putative sugar uptake protein lmo0424 (285 aa).

The next 9 helical transmembrane spans lie at S2–A21, Q31–L50, T55–F77, W111–M133, S146–T168, F172–I194, V207–A229, V233–F255, and L262–L284.

This sequence belongs to the GRP transporter (TC 2.A.7.5) family.

It is found in the cell membrane. This is Putative sugar uptake protein lmo0424 from Listeria monocytogenes serovar 1/2a (strain ATCC BAA-679 / EGD-e).